The sequence spans 542 residues: Formate--tetrahydrofolate ligase (542 aa).

53-60 (TPAGEGKT) provides a ligand contact to ATP.

The protein belongs to the formate--tetrahydrofolate ligase family.

It carries out the reaction (6S)-5,6,7,8-tetrahydrofolate + formate + ATP = (6R)-10-formyltetrahydrofolate + ADP + phosphate. It functions in the pathway one-carbon metabolism; tetrahydrofolate interconversion. This is Formate--tetrahydrofolate ligase from Thermotoga maritima (strain ATCC 43589 / DSM 3109 / JCM 10099 / NBRC 100826 / MSB8).